The primary structure comprises 267 residues: Glutamate racemase (267 aa).

Substrate-binding positions include 9–10 and 41–42; these read DS and YG. C72 functions as the Proton donor/acceptor in the catalytic mechanism. 73 to 74 contributes to the substrate binding site; it reads NT. C184 serves as the catalytic Proton donor/acceptor. Position 185–186 (185–186) interacts with substrate; the sequence is TH.

It belongs to the aspartate/glutamate racemases family.

It carries out the reaction L-glutamate = D-glutamate. It participates in cell wall biogenesis; peptidoglycan biosynthesis. In terms of biological role, provides the (R)-glutamate required for cell wall biosynthesis. This Staphylococcus epidermidis (strain ATCC 12228 / FDA PCI 1200) protein is Glutamate racemase.